The following is an 88-amino-acid chain: DNA-directed RNA polymerase subunit omega (88 aa).

This sequence belongs to the RNA polymerase subunit omega family. The RNAP catalytic core consists of 2 alpha, 1 beta, 1 beta' and 1 omega subunit. When a sigma factor is associated with the core the holoenzyme is formed, which can initiate transcription.

It carries out the reaction RNA(n) + a ribonucleoside 5'-triphosphate = RNA(n+1) + diphosphate. Promotes RNA polymerase assembly. Latches the N- and C-terminal regions of the beta' subunit thereby facilitating its interaction with the beta and alpha subunits. The chain is DNA-directed RNA polymerase subunit omega from Yersinia pestis (strain Pestoides F).